A 431-amino-acid polypeptide reads, in one-letter code: V-type ATP synthase beta chain (431 aa).

It belongs to the ATPase alpha/beta chains family.

Functionally, produces ATP from ADP in the presence of a proton gradient across the membrane. The V-type beta chain is a regulatory subunit. The protein is V-type ATP synthase beta chain of Treponema denticola (strain ATCC 35405 / DSM 14222 / CIP 103919 / JCM 8153 / KCTC 15104).